We begin with the raw amino-acid sequence, 328 residues long: Formimidoylglutamase (328 aa).

Mn(2+)-binding residues include His133, Asp159, His161, Asp163, Asp253, and Asp255.

This sequence belongs to the arginase family. The cofactor is Mn(2+).

The catalysed reaction is N-formimidoyl-L-glutamate + H2O = formamide + L-glutamate. Its pathway is amino-acid degradation; L-histidine degradation into L-glutamate; L-glutamate from N-formimidoyl-L-glutamate (hydrolase route): step 1/1. Catalyzes the conversion of N-formimidoyl-L-glutamate to L-glutamate and formamide. The polypeptide is Formimidoylglutamase (Streptococcus pyogenes serotype M28 (strain MGAS6180)).